A 203-amino-acid polypeptide reads, in one-letter code: 5-formyltetrahydrofolate cyclo-ligase (203 aa).

A2 carries the post-translational modification N-acetylalanine. ATP-binding positions include 10–14 (KRSLR) and R14. Substrate is bound by residues L56, E61, and 148 to 152 (RGKGY). Residue 145–153 (RLGRGKGYY) participates in ATP binding. Residues D154 and D189 each contribute to the Mg(2+) site.

The protein belongs to the 5-formyltetrahydrofolate cyclo-ligase family. Monomer. Requires Mg(2+) as cofactor.

The protein localises to the cytoplasm. The catalysed reaction is (6S)-5-formyl-5,6,7,8-tetrahydrofolate + ATP = (6R)-5,10-methenyltetrahydrofolate + ADP + phosphate. Contributes to tetrahydrofolate metabolism. Helps regulate carbon flow through the folate-dependent one-carbon metabolic network that supplies carbon for the biosynthesis of purines, thymidine and amino acids. Catalyzes the irreversible conversion of 5-formyltetrahydrofolate (5-FTHF) to yield 5,10-methenyltetrahydrofolate. The sequence is that of 5-formyltetrahydrofolate cyclo-ligase (MTHFS) from Homo sapiens (Human).